Here is a 306-residue protein sequence, read N- to C-terminus: Ribonuclease Z (306 aa).

Residues His63, His65, Asp67, His68, His141, Asp208, and His266 each coordinate Zn(2+). The Proton acceptor role is filled by Asp67.

The protein belongs to the RNase Z family. Homodimer. Requires Zn(2+) as cofactor.

The enzyme catalyses Endonucleolytic cleavage of RNA, removing extra 3' nucleotides from tRNA precursor, generating 3' termini of tRNAs. A 3'-hydroxy group is left at the tRNA terminus and a 5'-phosphoryl group is left at the trailer molecule.. Functionally, zinc phosphodiesterase, which displays some tRNA 3'-processing endonuclease activity. Probably involved in tRNA maturation, by removing a 3'-trailer from precursor tRNA. This chain is Ribonuclease Z, found in Chlamydia abortus (strain DSM 27085 / S26/3) (Chlamydophila abortus).